Consider the following 1580-residue polypeptide: MATPTVIKILGRDSIVADPGIWKRHVAQDLLTNCPSSTYILISDTTLTPLYVPSFQQAFEAAASSVTPKPRLLTYAIPPGEVSKSRQTKAEIEDWMLSRQPPCGRDTVIIALGGGVIGDLIGYVSATYMRGVRFVQVPTTLLAMVDSSIGGKTAIDTTHGKNLIGAIWQPEKIYLDMEFLNTLPEREFINGMAETAAISSEEDFAALERNADAILAAVKSENTTERPRFSGIQEILKLTILASARFKADVVSKDEREGGLRNLLNFGHSIGHAIEGILAPQILHGECVAIGMVKEAELARHLGILKSVAVSRLVKCLASYGLPTSLKDSRVRRLSAGKHCSVEQLLAFMAVDKKNAGPMKKVVLLSSIGSTHEQKASVVSNKDIKIVLAPSIEVSPGVPHALEITCVPPGSKSISNRALVLAALGSGTCRIKNLLHSDDTEVMLSALERLGAATFSWEEEGEVLVVHGKGGRLQASPDALYLGNAGTASRFLTTVATLANKSTVDSTILTGNARMKQRPIGALVDSLRTNGAGIKYMETTGCLPLKIDASGGFAGGHISLAAKVSSQYVSSLLMCAPYAKEPVTLKLVGGKPISQPYIDMTTAMMRSFGIDVKKSTSEEHTYHIPQGRYMNPTEYIIESDASSATYPLAVAAITGTTCTIPNIGSKSLQGDARFAVDVLRPMGCEVNQSSFSTTVTGPRNGALNALPNVDMEPMTDAFLTASVLAAVATAGSTSTTRIFGIANQRVKECNRIKAMKDELAKFGVTCREHEDGLEIDGIDRSALLRLPHGVYCYDDHRVAMSFSVLSLAASHPTLILEKECVGKTWPAWWDTLAQLFKANLEGVELKSEKKKAEKPAASLFIIGMRGAGKTTSGLWASKVLKRPFIDLDVELESKLGKSIPEIIKEQGWEGFRANELALLRQVLSEKPTGYVFACGGGIVETEEARDLLTQYQKAHGNVLLVMRDINAVMDFLKIDKTRPAYVEDMMGVWLRRKPWFQQCSNIQYYSQQSDPSKMGSALESFSRFLRVVTGEVDHLALMKKKPQSFFVSLTLPDLRPSVDILNDITLGSDAVELRVDLLVDPSSSSEMPSVDYVAEQISILRSRVSVPLVFTIRTKSQGGRFPDDAHNAALDLYRLAIRMGSEFVDLEVTFPEYVLRAVTEMKGVSKIIASHHDVANRLSWRNGSWTQFYNKALQYGDIIKLVGIASQLDDNIALREFKIWAKKAHDIPVIAINMGERGRLSRILNGFMTPVSHPKLPFKAAPGQLSAKEIREGLSLMGEIESKKFAIVGKPISASRSPALHNALFADVGLPHVYGRLETDDVQNVKDLIHAPDFGGASITIPLKLDIMPLLDEIAPEAKVIGAVNTIVPAPREPGDVKKGPRLIGYNTDWQGMVQCLRHGGAVSPSTSNDPAPGLVIGGGGTARAAIHALHSMGYSPIYLVGRSESKLNDMALSFPATYNLQILKDAESLEILPSVAIGTIPGDQPIDPSMREVLCRLFEMAARIDAELKELAPKRVLLEMAYKPTVTPLSQLASDCGWATIPGLEALVGQGVYQFQLWTGITPVFRDARAAVMNADADI.

The 3-dehydroquinate synthase stretch occupies residues M1–N381. NAD(+) is bound by residues D44–T46, E81–K84, G114–V116, and D119. R130 contributes to the 7-phospho-2-dehydro-3-deoxy-D-arabino-heptonate binding site. T139–T140 is an NAD(+) binding site. Residues D146 and K152 each coordinate 7-phospho-2-dehydro-3-deoxy-D-arabino-heptonate. Residue K161 coordinates NAD(+). 7-phospho-2-dehydro-3-deoxy-D-arabino-heptonate is bound at residue N162. NAD(+) is bound by residues F179–T182 and N190. E194 is a binding site for Zn(2+). Residue K247 participates in 7-phospho-2-dehydro-3-deoxy-D-arabino-heptonate binding. Residue E257 is the Proton acceptor; for 3-dehydroquinate synthase activity of the active site. 7-phospho-2-dehydro-3-deoxy-D-arabino-heptonate-binding positions include R261–N265 and H268. H268 contacts Zn(2+). H272 functions as the Proton acceptor; for 3-dehydroquinate synthase activity in the catalytic mechanism. Positions 284 and 353 each coordinate 7-phospho-2-dehydro-3-deoxy-D-arabino-heptonate. H284 is a Zn(2+) binding site. Residues V394–A838 form an EPSP synthase region. The active-site For EPSP synthase activity is C820. The tract at residues A857–S1048 is shikimate kinase. G863–T870 is a binding site for ATP. The segment at L1049 to E1269 is 3-dehydroquinase. H1172 serves as the catalytic Proton acceptor; for 3-dehydroquinate dehydratase activity. Catalysis depends on K1200, which acts as the Schiff-base intermediate with substrate; for 3-dehydroquinate dehydratase activity. The tract at residues S1282–I1580 is shikimate dehydrogenase.

It in the N-terminal section; belongs to the sugar phosphate cyclases superfamily. Dehydroquinate synthase family. The protein in the 2nd section; belongs to the EPSP synthase family. In the 3rd section; belongs to the shikimate kinase family. This sequence in the 4th section; belongs to the type-I 3-dehydroquinase family. It in the C-terminal section; belongs to the shikimate dehydrogenase family. In terms of assembly, homodimer. Requires Zn(2+) as cofactor.

It localises to the cytoplasm. The catalysed reaction is 7-phospho-2-dehydro-3-deoxy-D-arabino-heptonate = 3-dehydroquinate + phosphate. It catalyses the reaction 3-dehydroquinate = 3-dehydroshikimate + H2O. It carries out the reaction shikimate + NADP(+) = 3-dehydroshikimate + NADPH + H(+). The enzyme catalyses shikimate + ATP = 3-phosphoshikimate + ADP + H(+). The catalysed reaction is 3-phosphoshikimate + phosphoenolpyruvate = 5-O-(1-carboxyvinyl)-3-phosphoshikimate + phosphate. It functions in the pathway metabolic intermediate biosynthesis; chorismate biosynthesis; chorismate from D-erythrose 4-phosphate and phosphoenolpyruvate: step 2/7. The protein operates within metabolic intermediate biosynthesis; chorismate biosynthesis; chorismate from D-erythrose 4-phosphate and phosphoenolpyruvate: step 3/7. It participates in metabolic intermediate biosynthesis; chorismate biosynthesis; chorismate from D-erythrose 4-phosphate and phosphoenolpyruvate: step 4/7. Its pathway is metabolic intermediate biosynthesis; chorismate biosynthesis; chorismate from D-erythrose 4-phosphate and phosphoenolpyruvate: step 5/7. It functions in the pathway metabolic intermediate biosynthesis; chorismate biosynthesis; chorismate from D-erythrose 4-phosphate and phosphoenolpyruvate: step 6/7. In terms of biological role, the AROM polypeptide catalyzes 5 consecutive enzymatic reactions in prechorismate polyaromatic amino acid biosynthesis. This is Pentafunctional AROM polypeptide from Uncinocarpus reesii (strain UAMH 1704).